Consider the following 403-residue polypeptide: Enoyl-[acyl-carrier-protein] reductase [NADH] (403 aa).

NAD(+) contacts are provided by residues 49-54 (GASSGY), 75-76 (FE), 112-113 (DA), and 141-142 (LA). Residue Tyr227 coordinates substrate. Tyr237 functions as the Proton donor in the catalytic mechanism. NAD(+)-binding positions include Lys246 and 276–278 (VVT).

The protein belongs to the TER reductase family. Monomer.

It catalyses the reaction a 2,3-saturated acyl-[ACP] + NAD(+) = a (2E)-enoyl-[ACP] + NADH + H(+). It functions in the pathway lipid metabolism; fatty acid biosynthesis. Functionally, involved in the final reduction of the elongation cycle of fatty acid synthesis (FAS II). Catalyzes the reduction of a carbon-carbon double bond in an enoyl moiety that is covalently linked to an acyl carrier protein (ACP). The sequence is that of Enoyl-[acyl-carrier-protein] reductase [NADH] from Pseudomonas putida (strain ATCC 47054 / DSM 6125 / CFBP 8728 / NCIMB 11950 / KT2440).